Consider the following 215-residue polypeptide: Interleukin-12 subunit alpha (215 aa).

Residues 1–22 (MCQSRYLLFLATLVLLNHLTSA) form the signal peptide. Intrachain disulfides connect Cys33–Cys106, Cys60–Cys192, and Cys81–Cys119. Asn35, Asn89, and Asn167 each carry an N-linked (GlcNAc...) asparagine glycan.

Belongs to the IL-6 superfamily. Heterodimer with IL12B; disulfide-linked. This heterodimer is known as interleukin IL-12. Heterodimer with EBI3/IL27B; not disulfide-linked. This heterodimer is known as interleukin IL-35. Interacts with NBR1; this interaction promotes IL-12 secretion.

The protein resides in the secreted. Functionally, heterodimerizes with IL12B to form the IL-12 cytokine or with EBI3/IL27B to form the IL-35 cytokine. IL-12 is primarily produced by professional antigen-presenting cells (APCs) such as B-cells and dendritic cells (DCs) as well as macrophages and granulocytes and regulates T-cell and natural killer-cell responses, induces the production of interferon-gamma (IFN-gamma), favors the differentiation of T-helper 1 (Th1) cells and is an important link between innate resistance and adaptive immunity. Mechanistically, exerts its biological effects through a receptor composed of IL12R1 and IL12R2 subunits. Binding to the receptor results in the rapid tyrosine phosphorylation of a number of cellular substrates including the JAK family kinases TYK2 and JAK2. In turn, recruited STAT4 gets phosphorylated and translocates to the nucleus where it regulates cytokine/growth factor responsive genes. As part of IL-35, plays essential roles in maintaining the immune homeostasis of the liver microenvironment and also functions as an immune-suppressive cytokine. Mediates biological events through unconventional receptors composed of IL12RB2 and gp130/IL6ST heterodimers or homodimers. Signaling requires the transcription factors STAT1 and STAT4, which form a unique heterodimer that binds to distinct DNA sites. This chain is Interleukin-12 subunit alpha (Il12a), found in Rattus norvegicus (Rat).